The sequence spans 99 residues: DNA-directed RNA polymerase subunit Rpo11 (99 aa).

This sequence belongs to the archaeal Rpo11/eukaryotic RPB11/RPC19 RNA polymerase subunit family. In terms of assembly, part of the RNA polymerase complex.

The protein resides in the cytoplasm. It catalyses the reaction RNA(n) + a ribonucleoside 5'-triphosphate = RNA(n+1) + diphosphate. Its function is as follows. DNA-dependent RNA polymerase (RNAP) catalyzes the transcription of DNA into RNA using the four ribonucleoside triphosphates as substrates. This Aeropyrum pernix (strain ATCC 700893 / DSM 11879 / JCM 9820 / NBRC 100138 / K1) protein is DNA-directed RNA polymerase subunit Rpo11.